Here is a 186-residue protein sequence, read N- to C-terminus: Ribosome-recycling factor (186 aa).

The protein belongs to the RRF family.

The protein resides in the cytoplasm. Responsible for the release of ribosomes from messenger RNA at the termination of protein biosynthesis. May increase the efficiency of translation by recycling ribosomes from one round of translation to another. In Albidiferax ferrireducens (strain ATCC BAA-621 / DSM 15236 / T118) (Rhodoferax ferrireducens), this protein is Ribosome-recycling factor.